The primary structure comprises 351 residues: Protein Wnt-4 (351 aa).

An N-terminal signal peptide occupies residues 1-22 (MTPEYFLRSLLMMILAVFSANA). 11 disulfides stabilise this stretch: Cys78–Cys89, Cys128–Cys136, Cys138–Cys155, Cys206–Cys220, Cys208–Cys215, Cys280–Cys311, Cys296–Cys306, Cys310–Cys350, Cys326–Cys341, Cys328–Cys338, and Cys333–Cys334. Asn88 carries an N-linked (GlcNAc...) asparagine glycan. Residue Ser212 is the site of O-palmitoleoyl serine; by PORCN attachment. The N-linked (GlcNAc...) asparagine glycan is linked to Asn297.

It belongs to the Wnt family. Post-translationally, palmitoleoylation is required for efficient binding to frizzled receptors. Depalmitoleoylation leads to Wnt signaling pathway inhibition. Expressed in the brain and floor plate. In the developing pronephros, expressed in the proximal tubules and nephrostomes but absent from the pronephric duct.

The protein resides in the secreted. The protein localises to the extracellular space. It localises to the extracellular matrix. Its function is as follows. Ligand for members of the frizzled family of seven transmembrane receptors. Plays an important role in embryonic kidney development. Acts downstream of Notch signaling during pronephric kidney development. During early pronephros development, patterns the proximal pronephric anlagen to promote glomus and nephrostome formation. Also required later in pronephros development for tubulogenesis. The polypeptide is Protein Wnt-4 (wnt4) (Xenopus laevis (African clawed frog)).